A 1148-amino-acid chain; its full sequence is Phospholipid-transporting ATPase IB (1148 aa).

Over 1–44 (MSRATSVGDQLEAPARIIYLNQSHLNKFCDNRISTAKYSVLTFL) the chain is Cytoplasmic. Thr-5 carries the phosphothreonine modification. A helical transmembrane segment spans residues 45-66 (PRFLYEQIRRAANAFFLFIALL). Topologically, residues 67–71 (QQIPD) are exoplasmic loop. Residues 72–94 (VSPTGRYTTLVPLVIILTIAGIK) form a helical membrane-spanning segment. Residues 95 to 276 (EIIEDFKRHK…SNVEKVTNVQ (182 aa)) lie on the Cytoplasmic side of the membrane. Residues 277-298 (ILVLFGILLVMALVSSVGALFW) traverse the membrane as a helical segment. The Exoplasmic loop portion of the chain corresponds to 299–323 (NGSHGGKSWYIKKMDTNSDNFGYNL). A helical transmembrane segment spans residues 324–345 (LTFIILYNNLIPISLLVTLEVV). At 346–837 (KYTQALFINW…GAWSYNRVTK (492 aa)) the chain is on the cytoplasmic side. Asp-388 (4-aspartylphosphate intermediate) is an active-site residue. 12 residues coordinate ATP: Asp-388, Lys-389, Thr-390, Glu-488, Phe-529, Lys-552, Arg-585, Thr-665, Gly-666, Asp-667, Arg-755, and Lys-761. Mg(2+) is bound at residue Asp-388. A Mg(2+)-binding site is contributed by Thr-390. A Mg(2+)-binding site is contributed by Asp-781. The ATP site is built by Asn-784 and Asp-785. Asp-785 is a Mg(2+) binding site. A helical membrane pass occupies residues 838–858 (CILYCFYKNVVLYIIELWFAF). The Exoplasmic loop portion of the chain corresponds to 859 to 870 (VNGFSGQILFER). The chain crosses the membrane as a helical span at residues 871-890 (WCIGLYNVIFTALPPFTLGI). Residues 891-920 (FERSCTQESMLRFPQLYRITQNAEGFNTKV) are Cytoplasmic-facing. Residues 921–942 (FWGHCINALVHSLILFWVPMKA) traverse the membrane as a helical segment. Residues 943-956 (LEHDTPVTSGHATD) are Exoplasmic loop-facing. Residues 957-979 (YLFVGNIVYTYVVVTVCLKAGLE) traverse the membrane as a helical segment. The Cytoplasmic portion of the chain corresponds to 980–985 (TTAWTK). The helical transmembrane segment at 986-1006 (FSHLAVWGSMLIWLVFFGVYS) threads the bilayer. Over 1007 to 1024 (TIWPTIPIAPDMKGQATM) the chain is Exoplasmic loop. The chain crosses the membrane as a helical span at residues 1025–1049 (VLSSAYFWLGLFLVPTACLIEDVAW). Residues 1050-1148 (RAAKHTCKKT…DTTKENSRKK (99 aa)) lie on the Cytoplasmic side of the membrane.

This sequence belongs to the cation transport ATPase (P-type) (TC 3.A.3) family. Type IV subfamily. As to quaternary structure, component of a P4-ATPase flippase complex which consists of a catalytic alpha subunit and an accessory beta subunit. Interacts with TMEM30A to form a flippase complex. It depends on Mg(2+) as a cofactor. Found in testis, heart and brain. Most abundant in testis. Also detected in fetal tissues. Expressed in retinal photoreceptor cells; detected in retina outer nuclear layer and inner segment (at protein level).

It is found in the membrane. The protein localises to the golgi apparatus membrane. The protein resides in the endosome membrane. It localises to the cell membrane. Its subcellular location is the photoreceptor outer segment membrane. It is found in the photoreceptor inner segment membrane. The enzyme catalyses ATP + H2O + phospholipidSide 1 = ADP + phosphate + phospholipidSide 2.. It catalyses the reaction a 1,2-diacyl-sn-glycero-3-phospho-L-serine(out) + ATP + H2O = a 1,2-diacyl-sn-glycero-3-phospho-L-serine(in) + ADP + phosphate + H(+). The catalysed reaction is a 1,2-diacyl-sn-glycero-3-phosphoethanolamine(in) + ATP + H2O = a 1,2-diacyl-sn-glycero-3-phosphoethanolamine(out) + ADP + phosphate + H(+). Functionally, catalytic component of a P4-ATPase flippase complex which catalyzes the hydrolysis of ATP coupled to the transport of aminophospholipids from the outer to the inner leaflet of various membranes and ensures the maintenance of asymmetric distribution of phospholipids. Able to translocate phosphatidylserine, but not phosphatidylcholine. Phospholipid translocation also seems to be implicated in vesicle formation and in uptake of lipid signaling molecules. Reconstituted to liposomes, the ATP8A2:TMEM30A flippase complex predominantly transports phosphatidylserine (PS) and to a lesser extent phosphatidylethanolamine (PE). Phospholipid translocation is not associated with a countertransport of an inorganic ion or other charged substrate from the cytoplasmic side toward the exoplasm in connection with the phosphorylation from ATP. ATP8A2:TMEM30A may be involved in regulation of neurite outgrowth. Proposed to function in the generation and maintenance of phospholipid asymmetry in photoreceptor disk membranes and neuronal axon membranes. May be involved in vesicle trafficking in neuronal cells. Required for normal visual and auditory function; involved in photoreceptor and inner ear spiral ganglion cell survival. This is Phospholipid-transporting ATPase IB from Mus musculus (Mouse).